Reading from the N-terminus, the 299-residue chain is 33 kDa chaperonin (299 aa).

2 cysteine pairs are disulfide-bonded: C238/C240 and C271/C274.

It belongs to the HSP33 family. Post-translationally, under oxidizing conditions two disulfide bonds are formed involving the reactive cysteines. Under reducing conditions zinc is bound to the reactive cysteines and the protein is inactive.

It localises to the cytoplasm. Redox regulated molecular chaperone. Protects both thermally unfolding and oxidatively damaged proteins from irreversible aggregation. Plays an important role in the bacterial defense system toward oxidative stress. The protein is 33 kDa chaperonin of Alkaliphilus oremlandii (strain OhILAs) (Clostridium oremlandii (strain OhILAs)).